The sequence spans 581 residues: uncharacterized protein (581 aa).

This is an uncharacterized protein from Acanthamoeba polyphaga mimivirus (APMV).